Reading from the N-terminus, the 39-residue chain is Photosystem II reaction center protein L (39 aa).

The chain crosses the membrane as a helical span at residues 18–38; it reads SLYLGLLFVFVTGVLMSSYFF.

Belongs to the PsbL family. PSII is composed of 1 copy each of membrane proteins PsbA, PsbB, PsbC, PsbD, PsbE, PsbF, PsbH, PsbI, PsbJ, PsbK, PsbL, PsbM, PsbT, PsbX, PsbY, PsbZ, Psb30/Ycf12, peripheral proteins PsbO, CyanoQ (PsbQ), PsbU, PsbV and a large number of cofactors. It forms dimeric complexes.

Its subcellular location is the cellular thylakoid membrane. Functionally, one of the components of the core complex of photosystem II (PSII). PSII is a light-driven water:plastoquinone oxidoreductase that uses light energy to abstract electrons from H(2)O, generating O(2) and a proton gradient subsequently used for ATP formation. It consists of a core antenna complex that captures photons, and an electron transfer chain that converts photonic excitation into a charge separation. This subunit is found at the monomer-monomer interface and is required for correct PSII assembly and/or dimerization. This chain is Photosystem II reaction center protein L, found in Synechococcus sp. (strain CC9605).